A 263-amino-acid chain; its full sequence is Phosphatidylglycerol--prolipoprotein diacylglyceryl transferase (263 aa).

4 helical membrane passes run 6–26 (VIFS…VLGI), 50–70 (LLTA…VLIY), 85–105 (TWEG…AVII), and 112–132 (IPIF…LLLG). Arg-133 provides a ligand contact to a 1,2-diacyl-sn-glycero-3-phospho-(1'-sn-glycerol). 3 helical membrane-spanning segments follow: residues 169-189 (LYEA…LFYL), 197-217 (GATT…VEFF), and 233-253 (MGQL…LGAL).

It belongs to the Lgt family.

The protein resides in the cell membrane. It carries out the reaction L-cysteinyl-[prolipoprotein] + a 1,2-diacyl-sn-glycero-3-phospho-(1'-sn-glycerol) = an S-1,2-diacyl-sn-glyceryl-L-cysteinyl-[prolipoprotein] + sn-glycerol 1-phosphate + H(+). The protein operates within protein modification; lipoprotein biosynthesis (diacylglyceryl transfer). Its function is as follows. Catalyzes the transfer of the diacylglyceryl group from phosphatidylglycerol to the sulfhydryl group of the N-terminal cysteine of a prolipoprotein, the first step in the formation of mature lipoproteins. In Wolbachia pipientis subsp. Culex pipiens (strain wPip), this protein is Phosphatidylglycerol--prolipoprotein diacylglyceryl transferase.